A 1159-amino-acid chain; its full sequence is WASH complex subunit 5 (1159 aa).

Position 917 is a phosphoserine (S917).

The protein belongs to the strumpellin family. Component of the WASH core complex also described as WASH regulatory complex (SHRC) composed of WASH (WASHC1, WASH2P or WASH3P), WASHC2 (WASHC2A or WASHC2C), WASHC3, WASHC4 and WASHC5. The WASH core complex associates via WASHC2 with the F-actin-capping protein dimer (formed by CAPZA1, CAPZA2 or CAPZA3 and CAPZB) in a transient or substoichiometric manner which was initially described as WASH complex. Interacts with VCP, PI4K2A. Expressed ubiquitously.

Its subcellular location is the cytoplasm. It is found in the cytosol. The protein resides in the endoplasmic reticulum. The protein localises to the early endosome. Its function is as follows. Acts as a component of the WASH core complex that functions as a nucleation-promoting factor (NPF) at the surface of endosomes, where it recruits and activates the Arp2/3 complex to induce actin polymerization, playing a key role in the fission of tubules that serve as transport intermediates during endosome sorting. May be involved in axonal outgrowth. Involved in cellular localization of ADRB2. Involved in cellular trafficking of BLOC-1 complex cargos such as ATP7A and VAMP7. The chain is WASH complex subunit 5 from Homo sapiens (Human).